Here is a 411-residue protein sequence, read N- to C-terminus: Phosphoglycerate kinase (411 aa).

Substrate contacts are provided by residues 22 to 24 (DFN), arginine 37, 60 to 63 (HLSR), arginine 123, and arginine 165. Residues lysine 216, glutamate 339, and 366-369 (GGDS) each bind ATP.

It belongs to the phosphoglycerate kinase family. In terms of assembly, monomer.

The protein localises to the cytoplasm. It catalyses the reaction (2R)-3-phosphoglycerate + ATP = (2R)-3-phospho-glyceroyl phosphate + ADP. Its pathway is carbohydrate degradation; glycolysis; pyruvate from D-glyceraldehyde 3-phosphate: step 2/5. The polypeptide is Phosphoglycerate kinase (pgk) (Mycoplasma genitalium (strain ATCC 33530 / DSM 19775 / NCTC 10195 / G37) (Mycoplasmoides genitalium)).